We begin with the raw amino-acid sequence, 83 residues long: uncharacterized protein (83 aa).

A disordered region spans residues 40-65 (RMQAGASPDEDNDVNGETSFSRSFGG). Residues 54–65 (NGETSFSRSFGG) are compositionally biased toward polar residues.

This is an uncharacterized protein from Dictyostelium discoideum (Social amoeba).